Reading from the N-terminus, the 286-residue chain is Bifunctional protein FolD (286 aa).

Residues 164-166 (GAS), Ile-189, and Ile-230 contribute to the NADP(+) site.

The protein belongs to the tetrahydrofolate dehydrogenase/cyclohydrolase family. As to quaternary structure, homodimer.

The catalysed reaction is (6R)-5,10-methylene-5,6,7,8-tetrahydrofolate + NADP(+) = (6R)-5,10-methenyltetrahydrofolate + NADPH. It carries out the reaction (6R)-5,10-methenyltetrahydrofolate + H2O = (6R)-10-formyltetrahydrofolate + H(+). Its pathway is one-carbon metabolism; tetrahydrofolate interconversion. In terms of biological role, catalyzes the oxidation of 5,10-methylenetetrahydrofolate to 5,10-methenyltetrahydrofolate and then the hydrolysis of 5,10-methenyltetrahydrofolate to 10-formyltetrahydrofolate. This chain is Bifunctional protein FolD, found in Wolinella succinogenes (strain ATCC 29543 / DSM 1740 / CCUG 13145 / JCM 31913 / LMG 7466 / NCTC 11488 / FDC 602W) (Vibrio succinogenes).